Consider the following 490-residue polypeptide: Aspartyl/glutamyl-tRNA(Asn/Gln) amidotransferase subunit B (490 aa).

This sequence belongs to the GatB/GatE family. GatB subfamily. As to quaternary structure, heterotrimer of A, B and C subunits.

It carries out the reaction L-glutamyl-tRNA(Gln) + L-glutamine + ATP + H2O = L-glutaminyl-tRNA(Gln) + L-glutamate + ADP + phosphate + H(+). It catalyses the reaction L-aspartyl-tRNA(Asn) + L-glutamine + ATP + H2O = L-asparaginyl-tRNA(Asn) + L-glutamate + ADP + phosphate + 2 H(+). In terms of biological role, allows the formation of correctly charged Asn-tRNA(Asn) or Gln-tRNA(Gln) through the transamidation of misacylated Asp-tRNA(Asn) or Glu-tRNA(Gln) in organisms which lack either or both of asparaginyl-tRNA or glutaminyl-tRNA synthetases. The reaction takes place in the presence of glutamine and ATP through an activated phospho-Asp-tRNA(Asn) or phospho-Glu-tRNA(Gln). In Methylorubrum extorquens (strain PA1) (Methylobacterium extorquens), this protein is Aspartyl/glutamyl-tRNA(Asn/Gln) amidotransferase subunit B.